A 212-amino-acid polypeptide reads, in one-letter code: MFTGIVRGLGKVVKILKEKKISQWEVETSNELVKNLMLGASISCNGCCLTVRNIFRTIFCVDIVEETLRSTSLNTIIVGQYINLERSIKFGEEVGGHLVSGHIITTGVVSDKKELFSNQELWISLSASFFIKYFFYKGFVCVDGISLTIGSIKNNAFCVFLIPETILRTTIGQKIIGDVVNIEIDFYTQITVDSVERLLKVHPSKFINCIDI.

Lumazine-binding repeat units lie at residues 1-97 (MFTG…VGGH) and 98-195 (LVSG…VDSV). 2,4-dihydroxypteridine contacts are provided by residues 4–6 (GIV), 48–50 (CLT), 62–67 (DIVEET), 101–103 (GHI), Lys137, 146–148 (SLT), and 160–165 (FLIPET).

As to quaternary structure, homotrimer.

It carries out the reaction 2 6,7-dimethyl-8-(1-D-ribityl)lumazine + H(+) = 5-amino-6-(D-ribitylamino)uracil + riboflavin. It functions in the pathway cofactor biosynthesis; riboflavin biosynthesis; riboflavin from 2-hydroxy-3-oxobutyl phosphate and 5-amino-6-(D-ribitylamino)uracil: step 2/2. Catalyzes the dismutation of two molecules of 6,7-dimethyl-8-ribityllumazine, resulting in the formation of riboflavin and 5-amino-6-(D-ribitylamino)uracil. This chain is Riboflavin synthase (ribE), found in Buchnera aphidicola subsp. Baizongia pistaciae (strain Bp).